A 136-amino-acid chain; its full sequence is Heavy metal-associated isoprenylated plant protein 19 (136 aa).

In terms of domain architecture, HMA spans 13-77 (YMDVEFNVSM…LKKKTGKRVK (65 aa)). Residues cysteine 24 and cysteine 27 each contribute to the a metal cation site. Residue cysteine 133 is modified to Cysteine methyl ester. Cysteine 133 carries the S-farnesyl cysteine lipid modification. Positions 134–136 (SIS) are cleaved as a propeptide — removed in mature form.

The protein belongs to the HIPP family.

Heavy-metal-binding protein. In Arabidopsis thaliana (Mouse-ear cress), this protein is Heavy metal-associated isoprenylated plant protein 19.